Here is a 203-residue protein sequence, read N- to C-terminus: Thymidylate kinase (203 aa).

Position 14 to 21 (14 to 21) interacts with ATP; the sequence is GMDGIGKS.

The protein belongs to the thymidylate kinase family.

It carries out the reaction dTMP + ATP = dTDP + ADP. In terms of biological role, phosphorylation of dTMP to form dTDP in both de novo and salvage pathways of dTTP synthesis. The protein is Thymidylate kinase of Rickettsia typhi (strain ATCC VR-144 / Wilmington).